The chain runs to 458 residues: ATP synthase subunit beta (458 aa).

Residue 148–155 (GGAGVGKT) participates in ATP binding.

It belongs to the ATPase alpha/beta chains family. F-type ATPases have 2 components, CF(1) - the catalytic core - and CF(0) - the membrane proton channel. CF(1) has five subunits: alpha(3), beta(3), gamma(1), delta(1), epsilon(1). CF(0) has three main subunits: a(1), b(2) and c(9-12). The alpha and beta chains form an alternating ring which encloses part of the gamma chain. CF(1) is attached to CF(0) by a central stalk formed by the gamma and epsilon chains, while a peripheral stalk is formed by the delta and b chains.

It localises to the cell inner membrane. The enzyme catalyses ATP + H2O + 4 H(+)(in) = ADP + phosphate + 5 H(+)(out). In terms of biological role, produces ATP from ADP in the presence of a proton gradient across the membrane. The catalytic sites are hosted primarily by the beta subunits. The chain is ATP synthase subunit beta from Pseudomonas putida (strain ATCC 700007 / DSM 6899 / JCM 31910 / BCRC 17059 / LMG 24140 / F1).